The sequence spans 375 residues: tRNA-specific 2-thiouridylase MnmA (375 aa).

Residues 9–16 and leucine 35 each bind ATP; that span reads AMSGGVDS. Residue cysteine 105 is the Nucleophile of the active site. Cysteine 105 and cysteine 201 are oxidised to a cystine. Glycine 129 lines the ATP pocket. Residues 151–153 are interaction with tRNA; it reads KNQ. The active-site Cysteine persulfide intermediate is cysteine 201. The segment at 307 to 308 is interaction with tRNA; that stretch reads RY.

The protein belongs to the MnmA/TRMU family.

It is found in the cytoplasm. The catalysed reaction is S-sulfanyl-L-cysteinyl-[protein] + uridine(34) in tRNA + AH2 + ATP = 2-thiouridine(34) in tRNA + L-cysteinyl-[protein] + A + AMP + diphosphate + H(+). Functionally, catalyzes the 2-thiolation of uridine at the wobble position (U34) of tRNA, leading to the formation of s(2)U34. This chain is tRNA-specific 2-thiouridylase MnmA, found in Leptospira interrogans serogroup Icterohaemorrhagiae serovar copenhageni (strain Fiocruz L1-130).